The chain runs to 428 residues: Enolase 1 (428 aa).

Glutamine 167 provides a ligand contact to (2R)-2-phosphoglycerate. The active-site Proton donor is the glutamate 209. Aspartate 246, glutamate 288, and aspartate 315 together coordinate Mg(2+). (2R)-2-phosphoglycerate-binding residues include lysine 340, arginine 369, serine 370, and lysine 391. Lysine 340 (proton acceptor) is an active-site residue.

It belongs to the enolase family. In terms of assembly, component of the RNA degradosome, a multiprotein complex involved in RNA processing and mRNA degradation. It depends on Mg(2+) as a cofactor.

It is found in the cytoplasm. It localises to the secreted. The protein localises to the cell surface. It catalyses the reaction (2R)-2-phosphoglycerate = phosphoenolpyruvate + H2O. It participates in carbohydrate degradation; glycolysis; pyruvate from D-glyceraldehyde 3-phosphate: step 4/5. Its function is as follows. Catalyzes the reversible conversion of 2-phosphoglycerate (2-PG) into phosphoenolpyruvate (PEP). It is essential for the degradation of carbohydrates via glycolysis. The sequence is that of Enolase 1 from Pseudomonas syringae pv. syringae (strain B728a).